The following is an 819-amino-acid chain: Tegument protein UL47 homolog (819 aa).

Over residues 1–15 the composition is skewed to basic residues; it reads MQSGHYNRRQSRRQR. Disordered regions lie at residues 1-42 and 58-221; these read MQSG…THPP and LNSE…DYFS. The short motif at 11-31 is the Nuclear localization signal element; that stretch reads SRRQRISSNTTDSPRHTHGTR. Residues 32–42 are compositionally biased toward polar residues; it reads YRSTNWYTHPP. A compositionally biased stretch (acidic residues) spans 62 to 72; the sequence is MDQDSSSDASD. Residues 82 to 93 are compositionally biased toward polar residues; that stretch reads STYNGSEQNTST. A compositionally biased stretch (basic and acidic residues) spans 94-109; the sequence is SRHENRIFKLTEREAN. Tandem repeats lie at residues 117-132, 133-148, 149-164, 165-190, and 191-206. A 6 X 16 AA approximate tandem repeats region spans residues 117–218; it reads DAIDDEGEAE…IDDEGEAEED (102 aa). Positions 118-219 are enriched in acidic residues; the sequence is AIDDEGEAEE…DDEGEAEEDY (102 aa). Residues 207–218 form a 1-6; truncated repeat; sequence DAIDDEGEAEED. The Nuclear export signal signature appears at 785-807; it reads QPIPSVDLAENLMQYRNEILGLD.

The protein belongs to the alphaherpesvirinae HHV-1 UL47 family. As to quaternary structure, interacts with US3 kinase. Interacts with ORF24 and ORF27; these interactions seem important for efficient virion nuclear egress. Interacts with ORF17/VHS. Interacts with ORF9. Phosphorylated by US3. This phosphorylation is required for proper nuclear localization.

The protein resides in the virion tegument. It localises to the host nucleus. Its subcellular location is the host cytoplasm. In terms of biological role, tegument protein that can bind to various RNA transcripts. Plays a role in the attenuation of selective viral and cellular mRNA degradation by modulating the activity of host shutoff RNase ORF17/VHS. Also plays a role in the primary envelopment of virions in the perinuclear space, probably by interacting with two nuclear egress proteins ORF24 and ORF27. This Varicella-zoster virus (strain Dumas) (HHV-3) protein is Tegument protein UL47 homolog.